Reading from the N-terminus, the 199-residue chain is NAD(P)H dehydrogenase (quinone) (199 aa).

The Flavodoxin-like domain maps to 4-190; the sequence is VLVLYYSAYG…EAAKYQGAHV (187 aa). FMN is bound by residues 10–15 and 78–80; these read SAYGHI and TRF. Position 12 (Tyr-12) interacts with NAD(+). Trp-98 contacts substrate. FMN-binding positions include 113 to 119 and His-134; that span reads SSATQHG.

Belongs to the WrbA family. Requires FMN as cofactor.

It carries out the reaction a quinone + NADH + H(+) = a quinol + NAD(+). The catalysed reaction is a quinone + NADPH + H(+) = a quinol + NADP(+). This chain is NAD(P)H dehydrogenase (quinone), found in Rhizobium rhizogenes (strain K84 / ATCC BAA-868) (Agrobacterium radiobacter).